We begin with the raw amino-acid sequence, 214 residues long: Osteoclast-stimulating factor 1 (214 aa).

Ser-2 bears the N-acetylserine mark. The SH3 domain occupies 12-71 (GQVKVFRALYTFEPRTPDELYFEEGDIIYITDMSDTNWWKGTCKGRTGLIPSNYVAEQAE). ANK repeat units follow at residues 72–101 (SIDN…GVNG), 105–135 (AGST…ELNQ), and 139–168 (LGDT…RTDL). Ser-202 and Ser-213 each carry phosphoserine.

As to quaternary structure, interacts with SRC and SMN1. Interacts with FASLG.

It is found in the cytoplasm. Its function is as follows. Induces bone resorption, acting probably through a signaling cascade which results in the secretion of factor(s) enhancing osteoclast formation and activity. This chain is Osteoclast-stimulating factor 1 (OSTF1), found in Bos taurus (Bovine).